Here is a 102-residue protein sequence, read N- to C-terminus: MSEKSVEAAAELSAKDLKEKKEKVEEKAGRKERKKEVVEEEENGAEEEEEETAEDGEEEDDGDEEDEEEEEEEDEGPALVRAAEEEDEADPKRQKTENGASA.

Residues 1 to 102 are disordered; that stretch reads MSEKSVEAAA…RQKTENGASA (102 aa). The residue at position 2 (S2) is an N-acetylserine. Phosphoserine is present on S2. Position 4 is an N6-acetyllysine (K4). Phosphoserine is present on residues S5 and S13. Over residues 13–37 the composition is skewed to basic and acidic residues; it reads SAKDLKEKKEKVEEKAGRKERKKEV. The residue at position 15 (K15) is an N6-acetyllysine. Residues 38–76 are compositionally biased toward acidic residues; sequence VEEEENGAEEEEEETAEDGEEEDDGDEEDEEEEEEEDEG. T52 is modified (phosphothreonine). An N6-acetyllysine modification is found at K92.

The protein belongs to the pro/parathymosin family.

In terms of biological role, parathymosin may mediate immune function by blocking the effect of prothymosin alpha which confers resistance to certain opportunistic infections. The polypeptide is Parathymosin (PTMS) (Bos taurus (Bovine)).